Consider the following 98-residue polypeptide: Mu-type opioid receptor (98 aa).

Over 1–9 the chain is Cytoplasmic; the sequence is YTKMKTATN. A helical membrane pass occupies residues 10–34; the sequence is IYIFNLALADALATSTLPFQSVNYL. The Extracellular segment spans residues 35 to 45; that stretch reads MGTWPFGTILC. A helical transmembrane segment spans residues 46–68; that stretch reads KIVISIDYYNMFTSIFTLCTMSV. Residues 69–88 are Cytoplasmic-facing; the sequence is DRYIAVCHPVKALDFRTPRN. At Tyr-71 the chain carries Phosphotyrosine. The chain crosses the membrane as a helical span at residues 89–98; that stretch reads AKTVNVCNWI.

Belongs to the G-protein coupled receptor 1 family. In terms of assembly, forms homooligomers and heterooligomers with other GPCRs, such as OPRD1, OPRK1, OPRL1, NPFFR2, ADRA2A, SSTR2, CNR1 and CCR5 (probably in dimeric forms). Interacts with heterotrimeric G proteins; interaction with a heterotrimeric complex containing GNAI1, GNB1 and GNG2 stabilizes the active conformation of the receptor and increases its affinity for endomorphin-2, the synthetic opioid peptide DAMGO and for morphinan agonists. Interacts with PPL; the interaction disrupts agonist-mediated G-protein activation. Interacts (via C-terminus) with DNAJB4 (via C-terminus). Interacts with calmodulin; the interaction inhibits the constitutive activity of OPRM1; it abolishes basal and attenuates agonist-stimulated G-protein coupling. Interacts with FLNA, PLD2, RANBP9 and WLS and GPM6A. Interacts with RTP4. Interacts with SYP and GNAS. Interacts with RGS9, RGS17, RGS20, RGS4, PPP1R9B and HINT1. Phosphorylated. Differentially phosphorylated in basal and agonist-induced conditions. Agonist-mediated phosphorylation modulates receptor internalization. Phosphorylated by GRK2 in a agonist-dependent manner. Phosphorylated on tyrosine residues; the phosphorylation is involved in agonist-induced G-protein-independent receptor down-regulation. Post-translationally, phosphorylated. Differentially phosphorylated in basal and agonist-induced conditions. Agonist-mediated phosphorylation modulates receptor internalization. Phosphorylated by GRK2 in a agonist-dependent manner. Phosphorylated on tyrosine residues; the phosphorylation is involved in agonist-induced G-protein-independent receptor down-regulation. In terms of processing, ubiquitinated. A basal ubiquitination seems not to be related to degradation. Ubiquitination is increased upon formation of OPRM1:OPRD1 oligomers leading to proteasomal degradation; the ubiquitination is diminished by RTP4.

The protein resides in the cell membrane. The protein localises to the cell projection. It localises to the axon. Its subcellular location is the perikaryon. It is found in the dendrite. The protein resides in the endosome. In terms of biological role, receptor for endogenous opioids such as beta-endorphin and endomorphin. Receptor for natural and synthetic opioids including morphine, heroin, DAMGO, fentanyl, etorphine, buprenorphin and methadone. Also activated by enkephalin peptides, such as Met-enkephalin or Met-enkephalin-Arg-Phe, with higher affinity for Met-enkephalin-Arg-Phe. Agonist binding to the receptor induces coupling to an inactive GDP-bound heterotrimeric G-protein complex and subsequent exchange of GDP for GTP in the G-protein alpha subunit leading to dissociation of the G-protein complex with the free GTP-bound G-protein alpha and the G-protein beta-gamma dimer activating downstream cellular effectors. The agonist- and cell type-specific activity is predominantly coupled to pertussis toxin-sensitive G(i) and G(o) G alpha proteins, GNAI1, GNAI2, GNAI3 and GNAO1, and to a lesser extent to pertussis toxin-insensitive G alpha proteins GNAZ and GNA15. They mediate an array of downstream cellular responses, including inhibition of adenylate cyclase activity and both N-type and L-type calcium channels, activation of inward rectifying potassium channels, mitogen-activated protein kinase (MAPK), phospholipase C (PLC), phosphoinositide/protein kinase (PKC), phosphoinositide 3-kinase (PI3K) and regulation of NF-kappa-B. Also couples to adenylate cyclase stimulatory G alpha proteins. The selective temporal coupling to G-proteins and subsequent signaling can be regulated by RGSZ proteins, such as RGS9, RGS17 and RGS4. Phosphorylation by members of the GPRK subfamily of Ser/Thr protein kinases and association with beta-arrestins is involved in short-term receptor desensitization. Beta-arrestins associate with the GPRK-phosphorylated receptor and uncouple it from the G-protein thus terminating signal transduction. The phosphorylated receptor is internalized through endocytosis via clathrin-coated pits which involves beta-arrestins. The activation of the ERK pathway occurs either in a G-protein-dependent or a beta-arrestin-dependent manner and is regulated by agonist-specific receptor phosphorylation. Acts as a class A G-protein coupled receptor (GPCR) which dissociates from beta-arrestin at or near the plasma membrane and undergoes rapid recycling. Receptor down-regulation pathways are varying with the agonist and occur dependent or independent of G-protein coupling. Endogenous ligands induce rapid desensitization, endocytosis and recycling. Heterooligomerization with other GPCRs can modulate agonist binding, signaling and trafficking properties. Involved in neurogenesis. This is Mu-type opioid receptor (OPRM1) from Cavia porcellus (Guinea pig).